Here is a 915-residue protein sequence, read N- to C-terminus: Coiled-coil domain-containing protein 57 (915 aa).

The interval 1-502 (MLPLGSEPAL…MHGLPRPGAQ (502 aa)) is centrosomal targeting domain. 4 coiled-coil regions span residues 92–173 (VSEL…QRQE), 214–422 (LEAL…LERD), 456–483 (KSQV…VTLE), and 521–548 (IQRL…LSHQ). 3 disordered regions span residues 555–574 (TAAE…GDAA), 606–653 (PLKM…QAGP), and 724–915 (QHGG…NIMD). The microtubule binding domain stretch occupies residues 606–915 (PLKMSSPHAE…PKIRNYNIMD (310 aa)). Over residues 613 to 627 (HAESQPSVRTSTETT) the composition is skewed to polar residues. The segment covering 628 to 652 (GGSAQAGQAGGSVQAGQAGGSVQAG) has biased composition (low complexity). A compositionally biased stretch (basic and acidic residues) spans 745–758 (GREDAKSAEDEAPS). Polar residues-rich tracts occupy residues 781–794 (PKTQ…TCKS), 819–830 (SHSSSSFASGTL), and 841–852 (SSPSGVTSQGDS). The span at 879-891 (KTAAQAKAKTTGA) shows a compositional bias: low complexity.

In terms of assembly, interacts with CEP63; the interaction is required for their location to proximal end of centrioles. Interacts with microtubules.

Its subcellular location is the cytoplasm. The protein localises to the cytoskeleton. It localises to the microtubule organizing center. The protein resides in the centrosome. It is found in the centriolar satellite. Its subcellular location is the centriole. The protein localises to the spindle. Its function is as follows. Pleiotropic regulator of centriole duplication, mitosis, and ciliogenesis. Critical interface between centrosome and microtubule-mediated cellular processes. Centriole duplication protein required for recruitment of CEP63, CEP152, and PLK4 to the centrosome. Independent of its centrosomal targeting, localizes to and interacts with microtubules and regulates microtubule nucleation, stability, and mitotic progression. This Homo sapiens (Human) protein is Coiled-coil domain-containing protein 57.